Here is a 449-residue protein sequence, read N- to C-terminus: Phosphoglucosamine mutase (449 aa).

Catalysis depends on serine 100, which acts as the Phosphoserine intermediate. The Mg(2+) site is built by serine 100, aspartate 241, aspartate 243, and aspartate 245. A Phosphoserine modification is found at serine 100.

It belongs to the phosphohexose mutase family. Mg(2+) serves as cofactor. Activated by phosphorylation.

It carries out the reaction alpha-D-glucosamine 1-phosphate = D-glucosamine 6-phosphate. In terms of biological role, catalyzes the conversion of glucosamine-6-phosphate to glucosamine-1-phosphate. The sequence is that of Phosphoglucosamine mutase from Caldicellulosiruptor bescii (strain ATCC BAA-1888 / DSM 6725 / KCTC 15123 / Z-1320) (Anaerocellum thermophilum).